The following is a 279-amino-acid chain: 3-methyl-2-oxobutanoate hydroxymethyltransferase (279 aa).

Positions 43 and 82 each coordinate Mg(2+). Residues 43-44 (DS), aspartate 82, and lysine 112 each bind 3-methyl-2-oxobutanoate. Residue glutamate 114 participates in Mg(2+) binding. The active-site Proton acceptor is glutamate 181.

It belongs to the PanB family. In terms of assembly, homodecamer; pentamer of dimers. The cofactor is Mg(2+).

It is found in the cytoplasm. The catalysed reaction is 3-methyl-2-oxobutanoate + (6R)-5,10-methylene-5,6,7,8-tetrahydrofolate + H2O = 2-dehydropantoate + (6S)-5,6,7,8-tetrahydrofolate. It functions in the pathway cofactor biosynthesis; (R)-pantothenate biosynthesis; (R)-pantoate from 3-methyl-2-oxobutanoate: step 1/2. In terms of biological role, catalyzes the reversible reaction in which hydroxymethyl group from 5,10-methylenetetrahydrofolate is transferred onto alpha-ketoisovalerate to form ketopantoate. The chain is 3-methyl-2-oxobutanoate hydroxymethyltransferase from Geobacillus sp. (strain WCH70).